A 327-amino-acid chain; its full sequence is uncharacterized protein (327 aa).

Residues 1 to 19 (MSIAQDRGIVFKLLSIYRA) are Cytoplasmic-facing. The chain crosses the membrane as a helical span at residues 20 to 40 (AAGIFMALAQLIVIFFGYCDF). Topologically, residues 41–51 (KIKGYRIASYN) are extracellular. Residues 52–72 (APTFASSFIILAVCLLLVVVL) form a helical membrane-spanning segment. Residues 73–104 (ENPEVKVTNSENSLFSALKQFFRVERKKLISC) are Cytoplasmic-facing. The helical transmembrane segment at 105-125 (LILLWSMFLSSFIMSEVVYFM) threads the bilayer. At 126 to 141 (PLFLTLHVNWDTKFQG) the chain is on the extracellular side. The chain crosses the membrane as a helical span at residues 142-162 (IAFMVASILGVTGSYFAPKLI). Over 163–199 (NVGCSCGRAKDGGLEESDTTGSETVEVKKKDSLYSGQ) the chain is Cytoplasmic. A helical membrane pass occupies residues 200–220 (VFLSIFALFVSLLGQAFMIGA). Residues 221–235 (SEALKHKSMPPTNSG) are Extracellular-facing. Residues 236-256 (IFFSAGMSITLLGYNFLASSI) traverse the membrane as a helical segment. Over 257–275 (PALFSMYIDPKLKVQLMPS) the chain is Cytoplasmic. The helical transmembrane segment at 276-296 (IGAISGIGKLVAPIVLAALYG) threads the bilayer. At 297–300 (TRLG) the chain is on the extracellular side. The chain crosses the membrane as a helical span at residues 301–321 (LSIAVGFGMILVAVSIPPLIW). The Cytoplasmic portion of the chain corresponds to 322–327 (LRKKRC).

It localises to the membrane. This is an uncharacterized protein from Saccharomyces cerevisiae (strain ATCC 204508 / S288c) (Baker's yeast).